Reading from the N-terminus, the 393-residue chain is Pyrimidine monooxygenase RutA (393 aa).

FMN contacts are provided by residues 79-80 (IK), Asn-145, Glu-154, 170-171 (RY), and Ser-220.

It belongs to the NtaA/SnaA/DszA monooxygenase family. RutA subfamily.

The enzyme catalyses uracil + FMNH2 + NADH + O2 = (Z)-3-ureidoacrylate + FMN + NAD(+) + H2O + H(+). It catalyses the reaction thymine + FMNH2 + NADH + O2 = (Z)-2-methylureidoacrylate + FMN + NAD(+) + H2O + H(+). Functionally, catalyzes the pyrimidine ring opening between N-3 and C-4 by an unusual flavin hydroperoxide-catalyzed mechanism, adding oxygen atoms in the process to yield ureidoacrylate peracid, that immediately reacts with FMN forming ureidoacrylate and FMN-N(5)-oxide. The FMN-N(5)-oxide reacts spontaneously with NADH to produce FMN. Requires the flavin reductase RutF to regenerate FMN in vivo. This is Pyrimidine monooxygenase RutA from Escherichia coli O6:H1 (strain CFT073 / ATCC 700928 / UPEC).